The sequence spans 450 residues: MAKGEIVTVKIEEMDFKGYGVGYCEGKPLKVRGGILGQRVAVRVKKGKKGRAEGEIVEVIERSPFEVESPCPHFGECGGCTYQNLSYENQLKIKKDVVLKLLEKEGIKDFEFLGIERSPKVYGYRNKMEYTFGTDREGKKALGLHRKGKFYDVVMTDKCNIVDEDFTKALSLTFNYALEKNLPFYDKKTHEGYLRYLVVRKASKNGELLINIVTTTQLKHKFDDLVELYRSANFSSTLVGVLHTYNDSWSDAVICEKLEVLYGRDYLIEELLGLKFKISAFSFFQTNSYGAERIYSTVREFAGDVSNKTIFDLYCGTGTIGIVMAPLARKVIGIELVEEAVFSAKENAALNGLENAVFIAGDVSKKLREIKEKPDIVVVDPPRSGVNPKALEDIVNFEPEKIIYVSCNPESFARDLRLFVDKGYAVKKVKAIDMFPHTYHVELVGLLEKS.

Residues Met-1–Glu-58 form the TRAM domain. [4Fe-4S] cluster contacts are provided by Cys-71, Cys-77, Cys-80, and Cys-159. Positions 285, 314, 335, and 380 each coordinate S-adenosyl-L-methionine. Catalysis depends on Cys-407, which acts as the Nucleophile.

The protein belongs to the class I-like SAM-binding methyltransferase superfamily. RNA M5U methyltransferase family.

This is an uncharacterized protein from Caldanaerobacter subterraneus subsp. tengcongensis (strain DSM 15242 / JCM 11007 / NBRC 100824 / MB4) (Thermoanaerobacter tengcongensis).